The sequence spans 72 residues: UPF0270 protein plu0398 (72 aa).

Belongs to the UPF0270 family.

This chain is UPF0270 protein plu0398, found in Photorhabdus laumondii subsp. laumondii (strain DSM 15139 / CIP 105565 / TT01) (Photorhabdus luminescens subsp. laumondii).